Here is a 240-residue protein sequence, read N- to C-terminus: Transcription factor bHLH101 (240 aa).

One can recognise a bHLH domain in the interval 65 to 117 (EKKLNHNASERDRRRKLNALYSSLRALLPLSDQKRKLSIPMTVARVVKYIPEQ).

In terms of assembly, homodimer. In terms of tissue distribution, flowers.

It localises to the nucleus. This Arabidopsis thaliana (Mouse-ear cress) protein is Transcription factor bHLH101 (BHLH101).